Reading from the N-terminus, the 63-residue chain is Beta-toxin NaTx36 (63 aa).

The LCN-type CS-alpha/beta domain maps to 1-62 (KDGYPMRSDG…VYDSATSKCR (62 aa)). Intrachain disulfides connect cysteine 11-cysteine 61, cysteine 15-cysteine 36, cysteine 22-cysteine 43, and cysteine 26-cysteine 45.

Belongs to the long (4 C-C) scorpion toxin superfamily. Sodium channel inhibitor family. Beta subfamily. In terms of tissue distribution, expressed by the venom gland.

The protein resides in the secreted. Beta toxins bind sodium channels (Nav) and shift the voltage of activation towards more negative potentials thereby affecting sodium channel activation and promoting spontaneous and repetitive firing. Only when tested on grasshopper mouse channels, this toxin inhibits Nav1.8/SCN10A sodium currents in a concentration and voltage-dependent manner (IC(50)=680 nM). This toxin hyperpolarizes the voltage dependence of Nav1.8/SCN10A activation, as well as steady-state fast inactivation and slow inactivation. In contrast to most beta scorpion toxins, this toxin inhibits grasshopper mouse Nav1.8/SCN10A currents through modulation of the domain I S4 voltage sensor, and the domain II second S5-S6 extracellular pore loop. This chain is Beta-toxin NaTx36, found in Centruroides sculpturatus (Arizona bark scorpion).